Reading from the N-terminus, the 122-residue chain is Large ribosomal subunit protein uL14 (122 aa).

This sequence belongs to the universal ribosomal protein uL14 family. In terms of assembly, part of the 50S ribosomal subunit. Forms a cluster with proteins L3 and L19. In the 70S ribosome, L14 and L19 interact and together make contacts with the 16S rRNA in bridges B5 and B8.

In terms of biological role, binds to 23S rRNA. Forms part of two intersubunit bridges in the 70S ribosome. The chain is Large ribosomal subunit protein uL14 from Bacillus anthracis (strain A0248).